The chain runs to 424 residues: UPF0597 protein Sputcn32_1209 (424 aa).

Belongs to the UPF0597 family.

The chain is UPF0597 protein Sputcn32_1209 from Shewanella putrefaciens (strain CN-32 / ATCC BAA-453).